A 354-amino-acid polypeptide reads, in one-letter code: Pyruvate dehydrogenase E1 component subunit alpha (354 aa).

A disordered region spans residues 1–29 (MAKATQDSNRPHKADVGSAIPNHDLPPIP).

As to quaternary structure, heterodimer of an alpha and a beta chain. Thiamine diphosphate serves as cofactor.

It catalyses the reaction N(6)-[(R)-lipoyl]-L-lysyl-[protein] + pyruvate + H(+) = N(6)-[(R)-S(8)-acetyldihydrolipoyl]-L-lysyl-[protein] + CO2. The pyruvate dehydrogenase complex catalyzes the overall conversion of pyruvate to acetyl-CoA and CO(2). It contains multiple copies of three enzymatic components: pyruvate dehydrogenase (E1), dihydrolipoamide acetyltransferase (E2) and lipoamide dehydrogenase (E3). The polypeptide is Pyruvate dehydrogenase E1 component subunit alpha (pdhA) (Zymomonas mobilis subsp. mobilis (strain ATCC 31821 / ZM4 / CP4)).